The primary structure comprises 157 residues: Transcription elongation factor GreA (157 aa).

Residues 14–37 adopt a coiled-coil conformation; that stretch reads LREELDRLLKLRPKITEAIAEARE.

Belongs to the GreA/GreB family.

In terms of biological role, necessary for efficient RNA polymerase transcription elongation past template-encoded arresting sites. The arresting sites in DNA have the property of trapping a certain fraction of elongating RNA polymerases that pass through, resulting in locked ternary complexes. Cleavage of the nascent transcript by cleavage factors such as GreA or GreB allows the resumption of elongation from the new 3'terminus. GreA releases sequences of 2 to 3 nucleotides. The protein is Transcription elongation factor GreA of Vibrio cholerae serotype O1 (strain ATCC 39315 / El Tor Inaba N16961).